The primary structure comprises 494 residues: Cytochrome P450 2A4 (494 aa).

The residue at position 131 (S131) is a Phosphoserine. K379 carries the N6-acetyllysine modification. C439 contributes to the heme binding site.

The protein belongs to the cytochrome P450 family. Heme is required as a cofactor. As to expression, kidney and lung. Expressed in liver, with a strong circadian rhythmicity. Circadian expression is regulated by DBP.

The protein resides in the endoplasmic reticulum membrane. Its subcellular location is the microsome membrane. The enzyme catalyses an organic molecule + reduced [NADPH--hemoprotein reductase] + O2 = an alcohol + oxidized [NADPH--hemoprotein reductase] + H2O + H(+). Functionally, highly active in the 15-alpha-hydroxylation of testosterone. Also active in the 15-alpha-hydroxylation of progesterone and androstenedione. Little or no activity on corticosterone, pregnenolone, dehydroepiandrosterone, estradiol or estriol. The polypeptide is Cytochrome P450 2A4 (Cyp2a4) (Mus musculus (Mouse)).